Consider the following 250-residue polypeptide: 3-deoxy-manno-octulosonate cytidylyltransferase (250 aa).

Belongs to the KdsB family.

It is found in the cytoplasm. It catalyses the reaction 3-deoxy-alpha-D-manno-oct-2-ulosonate + CTP = CMP-3-deoxy-beta-D-manno-octulosonate + diphosphate. It functions in the pathway nucleotide-sugar biosynthesis; CMP-3-deoxy-D-manno-octulosonate biosynthesis; CMP-3-deoxy-D-manno-octulosonate from 3-deoxy-D-manno-octulosonate and CTP: step 1/1. It participates in bacterial outer membrane biogenesis; lipopolysaccharide biosynthesis. Functionally, activates KDO (a required 8-carbon sugar) for incorporation into bacterial lipopolysaccharide in Gram-negative bacteria. This Rhizobium meliloti (strain 1021) (Ensifer meliloti) protein is 3-deoxy-manno-octulosonate cytidylyltransferase.